The following is a 320-amino-acid chain: Ribose-phosphate pyrophosphokinase (320 aa).

41-43 (NDN) contributes to the ATP binding site. Residues H134 and D175 each contribute to the Mg(2+) site. K198 is an active-site residue. D-ribose 5-phosphate-binding residues include R200 and D224.

It belongs to the ribose-phosphate pyrophosphokinase family. Class I subfamily. As to quaternary structure, homohexamer. The cofactor is Mg(2+).

It is found in the cytoplasm. The catalysed reaction is D-ribose 5-phosphate + ATP = 5-phospho-alpha-D-ribose 1-diphosphate + AMP + H(+). It participates in metabolic intermediate biosynthesis; 5-phospho-alpha-D-ribose 1-diphosphate biosynthesis; 5-phospho-alpha-D-ribose 1-diphosphate from D-ribose 5-phosphate (route I): step 1/1. Functionally, involved in the biosynthesis of the central metabolite phospho-alpha-D-ribosyl-1-pyrophosphate (PRPP) via the transfer of pyrophosphoryl group from ATP to 1-hydroxyl of ribose-5-phosphate (Rib-5-P). This chain is Ribose-phosphate pyrophosphokinase, found in Deinococcus radiodurans (strain ATCC 13939 / DSM 20539 / JCM 16871 / CCUG 27074 / LMG 4051 / NBRC 15346 / NCIMB 9279 / VKM B-1422 / R1).